Here is a 510-residue protein sequence, read N- to C-terminus: O-acetyltransferase pyr7 (510 aa).

This sequence belongs to the fumigaclavine B O-acetyltransferase family.

It functions in the pathway secondary metabolite biosynthesis; terpenoid biosynthesis. Functionally, O-acetyltransferase; part of the gene cluster that mediates the biosynthesis of pyripyropene A, a specific human acyl-coenzyme A:cholesterol acyltransferase 2 inhibitor. The first step of the pathway is the synthesis of nicotinyl-CoA from nicotinic acid by the nicotinic acid-CoA ligase pyr1. Nicotinyl-CoA is then a substrate of polyketide synthase pyr2 to produce 4-hydroxy-6-(3-pyridinyl)-2H-pyran-2-one (HPPO) which is further prenylated by the polyprenyl transferase pyr6 to yield farnesyl-HPPO. The next steps consist of an epoxidation of farnesyl-HPPO to epoxyfarnesyl-HPPO by FAD-dependent monooxygenase pyr5 and a cyclization of the terpenoid portion by the terpene cyclase pyr4 to yield deacetyl-pyripyropene E. The 2 cytochrome P450 monooxygenases pyr3 and pyr9, and the 2 acetyltransferases pyr7 and pyr8 are involved in the conversion of deacetyl-pyripyropene E into pyripyropene A through several cycles of oxidation and acetylation steps. Pyr7 acetylates deacetyl-pyripyropene E to pyripyropene E which is oxidized to 11-deacetyl-pyripyropene O by pyr3, which is in turn acetylated into pyripyropene O by pyr8. Pyripyropene O is then oxidized to deacetyl-pyripyropene A by pyr9. Deacetyl-pyripyropene A is finally acetylated to pyripyropene A by pyr8. In Aspergillus fumigatus (strain ATCC MYA-4609 / CBS 101355 / FGSC A1100 / Af293) (Neosartorya fumigata), this protein is O-acetyltransferase pyr7.